Consider the following 543-residue polypeptide: Keratin, type II cytoskeletal 75 (543 aa).

Polar residues predominate over residues 1–16 (MSRQSTITFQTSSRRG). The segment at 1–48 (MSRQSTITFQTSSRRGFSTASATTPATSRSRFSSASVTHSPAGSGGLG) is disordered. Residues 1 to 144 (MSRQSTITFQ…DPNIQRVRKE (144 aa)) are head. The segment covering 17-36 (FSTASATTPATSRSRFSSAS) has biased composition (low complexity). The interval 145 to 180 (EREQIKTLNNKFASFIDKVRFLEQQNKVLETKWSLL) is coil 1A. Residues 145-458 (EREQIKTLNN…KLLEGEECRL (314 aa)) enclose the IF rod domain. A linker 1 region spans residues 181–199 (QEQGTRTVRQSLEPFFEAY). The interval 200 to 292 (ITDLRRQLDS…LFEAELCQMQ (93 aa)) is coil 1B. The tract at residues 293–315 (TRVSDTSVVLSMDNNRSLDLDSI) is linker 12. The segment at 316–454 (IAEVKAQYEE…ATYRKLLEGE (139 aa)) is coil 2. Residues 455–543 (ECRLSGEGVS…TSSSRKSYKH (89 aa)) are tail. Positions 511 to 543 (SSFSNSSSRGLGGSGSSFKFVSTTSSSRKSYKH) are disordered. Residues 526–543 (SSFKFVSTTSSSRKSYKH) are compositionally biased toward low complexity.

This sequence belongs to the intermediate filament family. In terms of assembly, heterodimer of a type I and a type II keratin. May associate with KRT17.

Plays a central role in hair and nail formation. Essential component of keratin intermediate filaments in the companion layer of the hair follicle. The protein is Keratin, type II cytoskeletal 75 (KRT75) of Bos taurus (Bovine).